The sequence spans 357 residues: Glucose-6-phosphatase catalytic subunit 1 (357 aa).

Residues Met1–Asp28 lie on the Lumenal side of the membrane. The helical transmembrane segment at Trp29–Ile49 threads the bilayer. Over Trp50 to Asn60 the chain is Cytoplasmic. A helical membrane pass occupies residues Leu61–Gly81. At Gln82–Ser117 the chain is on the lumenal side. Arg83 contributes to the substrate binding site. An N-linked (GlcNAc...) asparagine glycan is attached at Asn96. A helical transmembrane segment spans residues Gly118 to Phe138. The active-site Proton donor is His119. Residues Arg139–Gly147 lie on the Cytoplasmic side of the membrane. Residues Phe148–Leu168 traverse the membrane as a helical segment. The Lumenal segment spans residues Ser169–Arg170. Position 170 (Arg170) interacts with substrate. Residues Ile171–Val191 form a helical membrane-spanning segment. His176 (nucleophile) is an active-site residue. At Ala192–Leu211 the chain is on the cytoplasmic side. Residues Ile212–Val232 form a helical membrane-spanning segment. Over Asp233–Asp254 the chain is Lumenal. A helical membrane pass occupies residues Thr255–Leu275. Over Asn276–Ser291 the chain is Cytoplasmic. A helical membrane pass occupies residues Leu292–Leu312. At Lys313–Ser320 the chain is on the lumenal side. The helical transmembrane segment at Ile321–Ile341 threads the bilayer. Topologically, residues Pro342–Leu357 are cytoplasmic. Residues Lys354 to Leu357 carry the Prevents secretion from ER motif.

This sequence belongs to the glucose-6-phosphatase family.

The protein resides in the endoplasmic reticulum membrane. It catalyses the reaction D-glucose 6-phosphate + H2O = D-glucose + phosphate. It functions in the pathway carbohydrate biosynthesis; gluconeogenesis. Its function is as follows. Hydrolyzes glucose-6-phosphate to glucose in the endoplasmic reticulum. Forms with the glucose-6-phosphate transporter (SLC37A4/G6PT) the complex responsible for glucose production in the terminal step of glycogenolysis and gluconeogenesis. Hence, it is the key enzyme in homeostatic regulation of blood glucose levels. The chain is Glucose-6-phosphatase catalytic subunit 1 (G6pc1) from Rattus norvegicus (Rat).